A 370-amino-acid polypeptide reads, in one-letter code: Chloromuconate cycloisomerase (370 aa).

The active-site Proton acceptor is the Lys165. Residues Asp194, Glu220, and Asp245 each contribute to the Mn(2+) site. The active-site Proton donor is Glu323.

It belongs to the mandelate racemase/muconate lactonizing enzyme family. It depends on Mn(2+) as a cofactor.

The catalysed reaction is 2-[(2R)-2-chloro-2,5-dihydro-5-oxofuryl]acetate = 3-chloro-cis,cis-muconate + H(+). Its pathway is aromatic compound metabolism; 3-chlorocatechol degradation. The protein is Chloromuconate cycloisomerase (tfdDI) of Cupriavidus pinatubonensis (strain JMP 134 / LMG 1197) (Cupriavidus necator (strain JMP 134)).